The chain runs to 98 residues: Large ribosomal subunit protein uL23 (98 aa).

This sequence belongs to the universal ribosomal protein uL23 family. In terms of assembly, part of the 50S ribosomal subunit. Contacts protein L29, and trigger factor when it is bound to the ribosome.

In terms of biological role, one of the early assembly proteins it binds 23S rRNA. One of the proteins that surrounds the polypeptide exit tunnel on the outside of the ribosome. Forms the main docking site for trigger factor binding to the ribosome. This is Large ribosomal subunit protein uL23 from Gluconacetobacter diazotrophicus (strain ATCC 49037 / DSM 5601 / CCUG 37298 / CIP 103539 / LMG 7603 / PAl5).